Reading from the N-terminus, the 306-residue chain is 2-phosphoglycerate kinase (306 aa).

The region spanning 1-90 (MIMVQGEVSG…LWRKIRQCKE (90 aa)) is the ATP-cone domain.

The protein belongs to the 2-phosphoglycerate kinase family. Requires a divalent metal cation as cofactor.

It carries out the reaction (2R)-2-phosphoglycerate + ATP = (2R)-2,3-bisphosphoglycerate + ADP + H(+). It functions in the pathway thermoadapter biosynthesis; cyclic 2,3-diphosphoglycerate biosynthesis; cyclic 2,3-diphosphoglycerate from 2-phospho-D-glycerate: step 1/2. Catalyzes the phosphorylation of 2-phosphoglycerate to 2,3-diphosphoglycerate. Involved in the biosynthesis of cyclic 2,3-bisphosphoglycerate, a thermoprotectant. This chain is 2-phosphoglycerate kinase, found in Methanothermobacter thermautotrophicus (strain ATCC 29096 / DSM 1053 / JCM 10044 / NBRC 100330 / Delta H) (Methanobacterium thermoautotrophicum).